The primary structure comprises 363 residues: Chorismate synthase (363 aa).

2 residues coordinate NADP(+): R48 and R54. FMN contacts are provided by residues 125-127, 237-238, G277, 292-296, and R318; these read RSS, NA, and KPTSS.

The protein belongs to the chorismate synthase family. Homotetramer. Requires FMNH2 as cofactor.

The catalysed reaction is 5-O-(1-carboxyvinyl)-3-phosphoshikimate = chorismate + phosphate. It functions in the pathway metabolic intermediate biosynthesis; chorismate biosynthesis; chorismate from D-erythrose 4-phosphate and phosphoenolpyruvate: step 7/7. In terms of biological role, catalyzes the anti-1,4-elimination of the C-3 phosphate and the C-6 proR hydrogen from 5-enolpyruvylshikimate-3-phosphate (EPSP) to yield chorismate, which is the branch point compound that serves as the starting substrate for the three terminal pathways of aromatic amino acid biosynthesis. This reaction introduces a second double bond into the aromatic ring system. This chain is Chorismate synthase, found in Pseudomonas putida (strain GB-1).